The primary structure comprises 562 residues: Dihydroxy-acid dehydratase (562 aa).

Mg(2+) is bound at residue D80. C121 contributes to the [2Fe-2S] cluster binding site. The Mg(2+) site is built by D122 and K123. K123 bears the N6-carboxylysine mark. C194 serves as a coordination point for [2Fe-2S] cluster. Residue E446 participates in Mg(2+) binding. S472 functions as the Proton acceptor in the catalytic mechanism.

Belongs to the IlvD/Edd family. In terms of assembly, homodimer. Requires [2Fe-2S] cluster as cofactor. The cofactor is Mg(2+).

It catalyses the reaction (2R)-2,3-dihydroxy-3-methylbutanoate = 3-methyl-2-oxobutanoate + H2O. The enzyme catalyses (2R,3R)-2,3-dihydroxy-3-methylpentanoate = (S)-3-methyl-2-oxopentanoate + H2O. It participates in amino-acid biosynthesis; L-isoleucine biosynthesis; L-isoleucine from 2-oxobutanoate: step 3/4. The protein operates within amino-acid biosynthesis; L-valine biosynthesis; L-valine from pyruvate: step 3/4. Functionally, functions in the biosynthesis of branched-chain amino acids. Catalyzes the dehydration of (2R,3R)-2,3-dihydroxy-3-methylpentanoate (2,3-dihydroxy-3-methylvalerate) into 2-oxo-3-methylpentanoate (2-oxo-3-methylvalerate) and of (2R)-2,3-dihydroxy-3-methylbutanoate (2,3-dihydroxyisovalerate) into 2-oxo-3-methylbutanoate (2-oxoisovalerate), the penultimate precursor to L-isoleucine and L-valine, respectively. This Staphylococcus aureus (strain bovine RF122 / ET3-1) protein is Dihydroxy-acid dehydratase.